Consider the following 197-residue polypeptide: Dephospho-CoA kinase (197 aa).

One can recognise a DPCK domain in the interval 3–197; the sequence is VLGLTGSIGL…IDELRGQRGS (195 aa). 11 to 16 provides a ligand contact to ATP; that stretch reads GLGKST.

It belongs to the CoaE family.

It is found in the cytoplasm. The enzyme catalyses 3'-dephospho-CoA + ATP = ADP + CoA + H(+). Its pathway is cofactor biosynthesis; coenzyme A biosynthesis; CoA from (R)-pantothenate: step 5/5. Catalyzes the phosphorylation of the 3'-hydroxyl group of dephosphocoenzyme A to form coenzyme A. The chain is Dephospho-CoA kinase from Mesorhizobium japonicum (strain LMG 29417 / CECT 9101 / MAFF 303099) (Mesorhizobium loti (strain MAFF 303099)).